Here is a 380-residue protein sequence, read N- to C-terminus: 3-isopropylmalate dehydrogenase (380 aa).

Residue glycine 79–glutamate 90 coordinates NAD(+). Positions 97, 107, 136, and 229 each coordinate substrate. 3 residues coordinate Mg(2+): aspartate 229, aspartate 254, and aspartate 258. Residue glycine 294–asparagine 306 coordinates NAD(+).

The protein belongs to the isocitrate and isopropylmalate dehydrogenases family. In terms of assembly, homodimer. Mg(2+) serves as cofactor. Requires Mn(2+) as cofactor.

It localises to the cytoplasm. The enzyme catalyses (2R,3S)-3-isopropylmalate + NAD(+) = 4-methyl-2-oxopentanoate + CO2 + NADH. Its pathway is amino-acid biosynthesis; L-leucine biosynthesis; L-leucine from 3-methyl-2-oxobutanoate: step 3/4. Functionally, catalyzes the oxidation of 3-carboxy-2-hydroxy-4-methylpentanoate (3-isopropylmalate) to 3-carboxy-4-methyl-2-oxopentanoate. The product decarboxylates to 4-methyl-2 oxopentanoate. The sequence is that of 3-isopropylmalate dehydrogenase (LEU2) from Hapsidospora chrysogena (Acremonium chrysogenum).